The sequence spans 475 residues: Gamma-aminobutyric acid receptor subunit gamma-2 (475 aa).

The first 39 residues, 1 to 39, serve as a signal peptide directing secretion; that stretch reads MSSPNIWSTGSSVYSTPVFSQKMTVWILLLLSLYPGFTS. The Extracellular portion of the chain corresponds to 40 to 275; that stretch reads QKSDDDYEDY…FDLSRRMGYF (236 aa). 2 N-linked (GlcNAc...) asparagine glycosylation sites follow: Asn-52 and Asn-129. Cysteines 190 and 204 form a disulfide. N-linked (GlcNAc...) asparagine glycosylation is present at Asn-247. The chain crosses the membrane as a helical span at residues 276-296; it reads TIQTYIPCTLIVVLSWVSFWI. Residues 297-302 are Cytoplasmic-facing; sequence NKDAVP. A helical membrane pass occupies residues 303 to 322; it reads ARTSLGITTVLTMTTLSTIA. Topologically, residues 323–334 are extracellular; the sequence is RKSLPKVSYVTA. Residues 335-359 traverse the membrane as a helical segment; that stretch reads MDLFVSVCFIFVFSALVEYGTLHYF. Residues 360 to 451 lie on the Cytoplasmic side of the membrane; it reads VSNRKPSKDK…IHIRIAKMDS (92 aa). The interaction with GABARAP stretch occupies residues 433 to 450; the sequence is RTGAWRHGRIHIRIAKMD. A helical transmembrane segment spans residues 452 to 472; it reads YARIFFPTAFCLFNLVYWVSY. Over 473–475 the chain is Extracellular; it reads LYL.

It belongs to the ligand-gated ion channel (TC 1.A.9) family. Gamma-aminobutyric acid receptor (TC 1.A.9.5) subfamily. GABRG2 sub-subfamily. Heteropentamer, formed by a combination of alpha (GABRA1-6), beta (GABRB1-3), gamma (GABRG1-3), delta (GABRD), epsilon (GABRE), rho (GABRR1-3), pi (GABRP) and theta (GABRQ) chains, each subunit exhibiting distinct physiological and pharmacological properties. Interacts with GABARAP. Interacts with KIF21B. Identified in a complex of 720 kDa composed of LHFPL4, NLGN2, GABRA1, GABRB2, GABRG2 and GABRB3. Interacts with LHFPL4. Interacts with SHISA7; interaction leads to the regulation of GABA(A) receptor trafficking, channel deactivation kinetics and pharmacology. Post-translationally, palmitoylated by ZDHHC3/GODZ; required for the accumulation of GABA(A) receptors at the postsynaptic membrane of inhibitory GABAergic synapses.

Its subcellular location is the postsynaptic cell membrane. It localises to the cell membrane. It is found in the cell projection. The protein resides in the dendrite. The protein localises to the cytoplasmic vesicle membrane. It catalyses the reaction chloride(in) = chloride(out). Its activity is regulated as follows. Allosterically activated by benzodiazepines. Activated by pentobarbital. Potentiated by etomidate, propofol, pregnanolone. Inhibited by the antagonist bicuculline. Inhibited by zinc ions. Potentiated by histamine. Gamma subunit of the heteropentameric ligand-gated chloride channel gated by gamma-aminobutyric acid (GABA), a major inhibitory neurotransmitter in the brain. GABA-gated chloride channels, also named GABA(A) receptors (GABAAR), consist of five subunits arranged around a central pore and contain GABA active binding site(s) located at the alpha and beta subunit interface(s). When activated by GABA, GABAARs selectively allow the flow of chloride anions across the cell membrane down their electrochemical gradient. Gamma-2/GABRG2-containing GABAARs are found at both synaptic and extrasynaptic sites. Chloride influx into the postsynaptic neuron following GABAAR opening decreases the neuron ability to generate a new action potential, thereby reducing nerve transmission. GABAARs containing alpha-1 and beta-2 or -3 subunits exhibit synaptogenic activity; the gamma-2 subunit being necessary but not sufficient to induce rapid synaptic contacts formation. Extrasynaptic gamma-2-containing receptors contribute to the tonic GABAergic inhibition. GABAARs function also as histamine receptor where histamine binds at the interface of two neighboring beta subunits and potentiates GABA response in a gamma-2 subunit-controlled manner. The polypeptide is Gamma-aminobutyric acid receptor subunit gamma-2 (Homo sapiens (Human)).